Here is a 98-residue protein sequence, read N- to C-terminus: Large ribosomal subunit protein bL28 (98 aa).

This sequence belongs to the bacterial ribosomal protein bL28 family.

The sequence is that of Large ribosomal subunit protein bL28 from Phenylobacterium zucineum (strain HLK1).